The sequence spans 138 residues: MLSPRKVKYRKKQRGRLSGEAQKGNKISFGEYGLVSLEADFITARQIEAARVAMTRRVKRGGKVWIRIFPDIPYTKKPAETRMGKGKGGVDHWNAPVKLGTVMFEMSGVPRELAESAMMLASSKLPVKTTFVVRRDLR.

A compositionally biased stretch (basic residues) spans 1-15 (MLSPRKVKYRKKQRG). Residues 1–21 (MLSPRKVKYRKKQRGRLSGEA) form a disordered region.

This sequence belongs to the universal ribosomal protein uL16 family. In terms of assembly, part of the 50S ribosomal subunit.

Functionally, binds 23S rRNA and is also seen to make contacts with the A and possibly P site tRNAs. This Borrelia duttonii (strain Ly) protein is Large ribosomal subunit protein uL16.